Consider the following 114-residue polypeptide: Large ribosomal subunit protein bL19 (114 aa).

Belongs to the bacterial ribosomal protein bL19 family.

Its function is as follows. This protein is located at the 30S-50S ribosomal subunit interface and may play a role in the structure and function of the aminoacyl-tRNA binding site. In Desulfatibacillum aliphaticivorans, this protein is Large ribosomal subunit protein bL19.